The sequence spans 402 residues: Palmitoyltransferase PFA4 (402 aa).

Topologically, residues 1–8 are cytoplasmic; that stretch reads MAVQLKWP. A helical transmembrane segment spans residues 9–29; that stretch reads IIGVVIPCVLIAMVAYGSHYF. Over 30–39 the chain is Lumenal; it reads VFRTNLSRTE. The chain crosses the membrane as a helical span at residues 40 to 60; the sequence is QILYEVYVCIVWLSYYLAIVV. The Cytoplasmic portion of the chain corresponds to 61–125; sequence DPGSPPKNFT…GHNNLPHFLR (65 aa). Residues 78–128 form the DHHC domain; sequence RWCKKCQNYKPERSHHCKTCNKCVLKMDHHCPWTYNCVGHNNLPHFLRFVF. Catalysis depends on Cys108, which acts as the S-palmitoyl cysteine intermediate. Residues 126-146 form a helical membrane-spanning segment; that stretch reads FVFFLIVGMTYVLFQLGKQVL. Residues 147 to 165 are Lumenal-facing; that stretch reads HYYDSSKLPSYLIDKKEMC. The chain crosses the membrane as a helical span at residues 166-186; the sequence is AVIFLLPVTFFVFVSIIILFV. Residues 187-402 are Cytoplasmic-facing; the sequence is RCMINLLFRG…LVSKDEISNN (216 aa).

It belongs to the DHHC palmitoyltransferase family. PFA4 subfamily.

The protein resides in the endoplasmic reticulum membrane. The enzyme catalyses L-cysteinyl-[protein] + hexadecanoyl-CoA = S-hexadecanoyl-L-cysteinyl-[protein] + CoA. Mediates the reversible addition of palmitate to target proteins, thereby regulating their membrane association and biological function. The protein is Palmitoyltransferase PFA4 of Debaryomyces hansenii (strain ATCC 36239 / CBS 767 / BCRC 21394 / JCM 1990 / NBRC 0083 / IGC 2968) (Yeast).